A 1047-amino-acid chain; its full sequence is Probable phospholipid-transporting ATPase IIA (1047 aa).

Residue Thr2 is modified to N-acetylthreonine. Residues Thr2–Leu69 are Cytoplasmic-facing. The chain crosses the membrane as a helical span at residues Pro70–Ser91. Residues Gln92–Glu96 lie on the Extracellular side of the membrane. Residues Met97–Arg119 form a helical membrane-spanning segment. Over Glu120–Leu303 the chain is Cytoplasmic. The chain crosses the membrane as a helical span at residues Thr304–Ala325. Residues Gly326–Ile332 are Extracellular-facing. The helical transmembrane segment at Ile333–Gly354 threads the bilayer. Residues Lys355–Ala841 lie on the Cytoplasmic side of the membrane. Asp391 serves as the catalytic 4-aspartylphosphate intermediate. The ATP site is built by Asp391, Lys392, Thr393, Glu502, Phe544, Lys549, Lys568, Arg597, Thr677, Gly678, Asp679, Arg759, and Lys765. Asp391 contributes to the Mg(2+) binding site. Thr393 serves as a coordination point for Mg(2+). Asp785 provides a ligand contact to Mg(2+). ATP-binding residues include Asn788 and Asp789. Asp789 serves as a coordination point for Mg(2+). Residues Leu842 to Ser862 form a helical membrane-spanning segment. Over Val863–Gly874 the chain is Extracellular. A helical membrane pass occupies residues Phe875 to Val893. The Cytoplasmic portion of the chain corresponds to Leu894–Thr923. A helical transmembrane segment spans residues Phe924 to Ala942. Topologically, residues Leu943–Glu949 are extracellular. A helical membrane pass occupies residues Phe950–Thr972. Topologically, residues Ile973 to Trp978 are cytoplasmic. A helical membrane pass occupies residues Leu979–His999. The Extracellular segment spans residues Glu1000–Phe1006. A helical transmembrane segment spans residues Ile1007–Leu1030. Residues Lys1031 to Ser1047 are Cytoplasmic-facing.

The protein belongs to the cation transport ATPase (P-type) (TC 3.A.3) family. Type IV subfamily. As to quaternary structure, heterotrimer with MON2 and DOP1B; this complex regulates SNX3-retromer mediated endosomal sorting of WLS. Interacts with RAB5A and RAB11A. The cofactor is Mg(2+).

Its subcellular location is the early endosome membrane. The protein resides in the recycling endosome membrane. It localises to the late endosome membrane. The protein localises to the golgi apparatus. It is found in the trans-Golgi network membrane. Its subcellular location is the cell membrane. The catalysed reaction is ATP + H2O + phospholipidSide 1 = ADP + phosphate + phospholipidSide 2.. Its function is as follows. Plays a role in regulating membrane trafficking of cargo proteins, namely endosome to plasma membrane recycling, probably acting through RAB5 and RAB11 activation. Also involved in endosome to trans-Golgi network retrograde transport. In complex with MON2 and DOP1B, regulates SNX3 retromer-mediated endosomal sorting of WLS, a transporter of Wnt morphogens in developing tissues. Participates in the formation of endosomal carriers that direct WLS trafficking back to Golgi, away from lysosomal degradation. Appears to be implicated in intercellular communication by negatively regulating the release of exosomes. The flippase activity towards membrane lipids and its role in membrane asymmetry remains to be proved. Required for the maintenance of neurite morphology and synaptic transmission. In Homo sapiens (Human), this protein is Probable phospholipid-transporting ATPase IIA.